Consider the following 632-residue polypeptide: Chaperone protein HtpG (632 aa).

The segment at M1 to R339 is a; substrate-binding. Residues E340–R559 form a b region. The c stretch occupies residues M560–A632.

This sequence belongs to the heat shock protein 90 family. In terms of assembly, homodimer.

It localises to the cytoplasm. In terms of biological role, molecular chaperone. Has ATPase activity. This is Chaperone protein HtpG from Burkholderia cenocepacia (strain HI2424).